We begin with the raw amino-acid sequence, 323 residues long: Ribosomal protein L11 methyltransferase (323 aa).

S-adenosyl-L-methionine-binding residues include threonine 160, glycine 184, aspartate 206, and asparagine 257.

The protein belongs to the methyltransferase superfamily. PrmA family.

Its subcellular location is the cytoplasm. It catalyses the reaction L-lysyl-[protein] + 3 S-adenosyl-L-methionine = N(6),N(6),N(6)-trimethyl-L-lysyl-[protein] + 3 S-adenosyl-L-homocysteine + 3 H(+). Its function is as follows. Methylates ribosomal protein L11. The sequence is that of Ribosomal protein L11 methyltransferase from Agathobacter rectalis (strain ATCC 33656 / DSM 3377 / JCM 17463 / KCTC 5835 / VPI 0990) (Eubacterium rectale).